Here is a 251-residue protein sequence, read N- to C-terminus: uncharacterized protein (251 aa).

An N-terminal signal peptide occupies residues 1 to 18 (MRILIILSIILCSLFARA).

Belongs to the MlaA family.

This is an uncharacterized protein from Rickettsia felis (strain ATCC VR-1525 / URRWXCal2) (Rickettsia azadi).